A 540-amino-acid chain; its full sequence is Cytochrome bc1 complex cytochrome b subunit (540 aa).

The chain crosses the membrane as a helical span at residues 40 to 60 (EIALYSFIILLLTGVYLTLFF). Histidine 105 and histidine 119 together coordinate heme. The next 3 helical transmembrane spans lie at 109-129 (ALTF…TGAF), 137-157 (WIIG…GYSL), and 169-189 (IMSA…WLIF). Residues histidine 206 and histidine 221 each coordinate heme. Helical transmembrane passes span 207–227 (VLII…LVWY), 259–279 (FGLV…INAI), 325–345 (AFWV…YPFI), 371–391 (LGVM…NDLF), and 408–428 (IGLI…CLGL).

This sequence belongs to the cytochrome b family. In terms of assembly, the cytochrome bc1 complex is composed of a cytochrome b (QcrB), the Rieske protein iron-sulfur (QcrA) and a diheme cytochrome c (QcrC) subunit. The cofactor is heme.

It localises to the cell membrane. The enzyme catalyses a quinol + 2 Fe(III)-[cytochrome c](out) = a quinone + 2 Fe(II)-[cytochrome c](out) + 2 H(+)(out). In terms of biological role, cytochrome b subunit of the cytochrome bc1 complex, an essential component of the respiratory electron transport chain required for ATP synthesis. The bc1 complex catalyzes the oxidation of menaquinol and the reduction of cytochrome c in the respiratory chain. The bc1 complex operates through a Q-cycle mechanism that couples electron transfer to generation of the proton gradient that drives ATP synthesis. This is Cytochrome bc1 complex cytochrome b subunit (qcrB) from Corynebacterium diphtheriae (strain ATCC 700971 / NCTC 13129 / Biotype gravis).